The following is a 642-amino-acid chain: ATP-dependent rRNA helicase spb4 (642 aa).

The Q motif motif lies at 14-42 (WDGVTPALSEWVLDAVASMGFTRMTPVQA). Residues 45–250 (IPLFMAHKDV…RVGLRNPVKV (206 aa)) form the Helicase ATP-binding domain. 58-65 (AVTGSGKT) provides a ligand contact to ATP. The DEAD box signature appears at 198–201 (DEAD). A Helicase C-terminal domain is found at 284–438 (AIKHILYSLE…TLTITDADAA (155 aa)). Positions 522–625 (AYKDKQREKR…RLLRRAAKDK (104 aa)) form a coiled coil. Basic and acidic residues-rich tracts occupy residues 527 to 536 (QREKRRKEQV) and 577 to 628 (AKQA…KESK). The tract at residues 527–642 (QREKRRKEQV…DDDDEFKGFD (116 aa)) is disordered. Residues 632–642 (GDDDDEFKGFD) are compositionally biased toward acidic residues.

The protein belongs to the DEAD box helicase family. DDX55/SPB4 subfamily. Component of pre-60S ribosomal complexes.

It is found in the nucleus. Its subcellular location is the nucleolus. It catalyses the reaction ATP + H2O = ADP + phosphate + H(+). In terms of biological role, ATP-binding RNA helicase involved in the biogenesis of 60S ribosomal subunits. Binds 90S pre-ribosomal particles and dissociates from pre-60S ribosomal particles after processing of 27SB pre-rRNA. Required for the normal formation of 18S rRNA through the processing of pre-rRNAs at sites A0, A1 and A2, and the normal formation of 25S and 5.8S rRNAs through the processing of pre-rRNAs at sites C1 and C2. The chain is ATP-dependent rRNA helicase spb4 from Aspergillus niger (strain ATCC MYA-4892 / CBS 513.88 / FGSC A1513).